The primary structure comprises 123 residues: Small ribosomal subunit protein uS12 (123 aa).

The tract at residues M1–P28 is disordered. Residues R9–S21 show a composition bias toward basic residues. D89 carries the post-translational modification 3-methylthioaspartic acid.

Belongs to the universal ribosomal protein uS12 family. As to quaternary structure, part of the 30S ribosomal subunit. Contacts proteins S8 and S17. May interact with IF1 in the 30S initiation complex.

Functionally, with S4 and S5 plays an important role in translational accuracy. Its function is as follows. Interacts with and stabilizes bases of the 16S rRNA that are involved in tRNA selection in the A site and with the mRNA backbone. Located at the interface of the 30S and 50S subunits, it traverses the body of the 30S subunit contacting proteins on the other side and probably holding the rRNA structure together. The combined cluster of proteins S8, S12 and S17 appears to hold together the shoulder and platform of the 30S subunit. This chain is Small ribosomal subunit protein uS12, found in Ruegeria sp. (strain TM1040) (Silicibacter sp.).